We begin with the raw amino-acid sequence, 322 residues long: RNA-binding motif protein, X-linked 2 (322 aa).

Residue K8 forms a Glycyl lysine isopeptide (Lys-Gly) (interchain with G-Cter in SUMO2) linkage. Positions 36–114 constitute an RRM domain; that stretch reads AWIFLGGLPY…RTIRVDHVSN (79 aa). The tract at residues 134-322 is disordered; that stretch reads KGCGARTPSP…SSNPSDRWRH (189 aa). Phosphothreonine is present on T140. S149 carries the post-translational modification Phosphoserine. Residues 155 to 171 are compositionally biased toward basic residues; the sequence is TKKHKKDKKEKKKKKKE. Residues S186 and S188 each carry the phosphoserine modification. Residues 195 to 223 show a composition bias toward basic and acidic residues; it reads KEKDDTGPKKHSSKNSERAQKSEPREGQK. S232 carries the post-translational modification Phosphoserine. Positions 240–274 are enriched in basic and acidic residues; it reads RELKKEKPKHEHKSSSRREAREEKTRIRDRGRSSD. K243 participates in a covalent cross-link: Glycyl lysine isopeptide (Lys-Gly) (interchain with G-Cter in SUMO2). Phosphoserine is present on S272. The segment covering 289 to 308 has biased composition (basic residues); the sequence is YRSRSRSRDKSHRHKRARRS. S314 is subject to Phosphoserine.

The protein belongs to the IST3 family. As to quaternary structure, part of the activated spliceosome B/catalytic step 1 spliceosome, one of the forms of the spliceosome which has a well-formed active site but still cannot catalyze the branching reaction and is composed of at least 52 proteins, the U2, U5 and U6 snRNAs and the pre-mRNA. Component of the minor spliceosome, which splices U12-type introns.

Its subcellular location is the nucleus. In terms of biological role, involved in pre-mRNA splicing as component of the activated spliceosome. As a component of the minor spliceosome, involved in the splicing of U12-type introns in pre-mRNAs. The sequence is that of RNA-binding motif protein, X-linked 2 (RBMX2) from Homo sapiens (Human).